Consider the following 499-residue polypeptide: Glycerol kinase (499 aa).

Thr17 serves as a coordination point for ADP. Residues Thr17, Thr18, and Ser19 each coordinate ATP. Position 17 (Thr17) interacts with sn-glycerol 3-phosphate. Arg21 contributes to the ADP binding site. The sn-glycerol 3-phosphate site is built by Arg87, Glu88, Tyr139, and Asp243. Residues Arg87, Glu88, Tyr139, Asp243, and Gln244 each contribute to the glycerol site. Thr265 and Gly308 together coordinate ADP. 4 residues coordinate ATP: Thr265, Gly308, Gln312, and Gly409. The ADP site is built by Gly409 and Asn413.

The protein belongs to the FGGY kinase family.

The enzyme catalyses glycerol + ATP = sn-glycerol 3-phosphate + ADP + H(+). It participates in polyol metabolism; glycerol degradation via glycerol kinase pathway; sn-glycerol 3-phosphate from glycerol: step 1/1. Its activity is regulated as follows. Inhibited by fructose 1,6-bisphosphate (FBP). Functionally, key enzyme in the regulation of glycerol uptake and metabolism. Catalyzes the phosphorylation of glycerol to yield sn-glycerol 3-phosphate. This chain is Glycerol kinase, found in Pseudomonas putida (strain ATCC 700007 / DSM 6899 / JCM 31910 / BCRC 17059 / LMG 24140 / F1).